Consider the following 217-residue polypeptide: Probable transaldolase (217 aa).

Lys-83 (schiff-base intermediate with substrate) is an active-site residue.

Belongs to the transaldolase family. Type 3B subfamily.

It localises to the cytoplasm. It catalyses the reaction D-sedoheptulose 7-phosphate + D-glyceraldehyde 3-phosphate = D-erythrose 4-phosphate + beta-D-fructose 6-phosphate. The protein operates within carbohydrate degradation; pentose phosphate pathway; D-glyceraldehyde 3-phosphate and beta-D-fructose 6-phosphate from D-ribose 5-phosphate and D-xylulose 5-phosphate (non-oxidative stage): step 2/3. Its function is as follows. Transaldolase is important for the balance of metabolites in the pentose-phosphate pathway. This is Probable transaldolase from Ruegeria pomeroyi (strain ATCC 700808 / DSM 15171 / DSS-3) (Silicibacter pomeroyi).